Here is a 1155-residue protein sequence, read N- to C-terminus: DNA-directed RNA polymerase subunit beta (1155 aa).

Belongs to the RNA polymerase beta chain family. As to quaternary structure, the RNAP catalytic core consists of 2 alpha, 1 beta, 1 beta' and 1 omega subunit. When a sigma factor is associated with the core the holoenzyme is formed, which can initiate transcription.

It catalyses the reaction RNA(n) + a ribonucleoside 5'-triphosphate = RNA(n+1) + diphosphate. DNA-dependent RNA polymerase catalyzes the transcription of DNA into RNA using the four ribonucleoside triphosphates as substrates. The chain is DNA-directed RNA polymerase subunit beta from Borrelia duttonii (strain Ly).